Here is a 358-residue protein sequence, read N- to C-terminus: Src kinase-associated phosphoprotein 2 (358 aa).

Residues Ser6 and Ser9 each carry the phosphoserine modification. The interval 60–108 (PQEFQDKGDAEEGDEYDDPFAGPPDTISLASERYDKDDDGPSDGNQFPP) is disordered. At Tyr75 the chain carries Phosphotyrosine. Phosphoserine occurs at positions 87 and 90. In terms of domain architecture, PH spans 116-219 (FVIKAGYLEK…WVQQLKFILQ (104 aa)). Tyr151 and Tyr197 each carry phosphotyrosine. The residue at position 223 (Ser223) is a Phosphoserine. Positions 227–293 (PEDEDEKGDL…DSVQHPSGDK (67 aa)) are disordered. Low complexity predominate over residues 243 to 253 (PVPVSSPQRSQ). Over residues 255–270 (IDDEIYEELPEEEEDT) the composition is skewed to acidic residues. Tyr260 bears the Phosphotyrosine mark. 3 positions are modified to phosphoserine: Ser272, Ser282, and Ser285. Basic and acidic residues predominate over residues 274–293 (KMDEQGKGSRDSVQHPSGDK). The SH3 domain maps to 296–357 (DYANFYQGLW…PKAYLMEMYD (62 aa)).

Belongs to the SKAP family. As to quaternary structure, interacts with FYB1, which is required for SKAP2 protein stability. Interacts with PTPNS1. Part of a complex consisting of SKAP2, FYB1 and PTPNS1. Part of a complex consisting of SKAP2, FYB1 and LILRB3. Interacts with LAT, GRB2, PTK2B, and PRAM1. May interact with actin. May interact with FYN, HCK and LYN. Interacts with FASLG.

The protein resides in the cytoplasm. May be involved in B-cell and macrophage adhesion processes. In B-cells, may act by coupling the B-cell receptor (BCR) to integrin activation. May play a role in src signaling pathway. In Rattus norvegicus (Rat), this protein is Src kinase-associated phosphoprotein 2 (Skap2).